We begin with the raw amino-acid sequence, 356 residues long: UDP-3-O-acylglucosamine N-acyltransferase (356 aa).

H242 functions as the Proton acceptor in the catalytic mechanism.

The protein belongs to the transferase hexapeptide repeat family. LpxD subfamily. Homotrimer.

It catalyses the reaction a UDP-3-O-[(3R)-3-hydroxyacyl]-alpha-D-glucosamine + a (3R)-hydroxyacyl-[ACP] = a UDP-2-N,3-O-bis[(3R)-3-hydroxyacyl]-alpha-D-glucosamine + holo-[ACP] + H(+). It functions in the pathway bacterial outer membrane biogenesis; LPS lipid A biosynthesis. Its function is as follows. Catalyzes the N-acylation of UDP-3-O-acylglucosamine using 3-hydroxyacyl-ACP as the acyl donor. Is involved in the biosynthesis of lipid A, a phosphorylated glycolipid that anchors the lipopolysaccharide to the outer membrane of the cell. The protein is UDP-3-O-acylglucosamine N-acyltransferase of Acinetobacter baumannii (strain AB307-0294).